Reading from the N-terminus, the 305-residue chain is UDP-3-O-acyl-N-acetylglucosamine deacetylase (305 aa).

Zn(2+) is bound by residues H79, H238, and D242. H265 (proton donor) is an active-site residue.

It belongs to the LpxC family. It depends on Zn(2+) as a cofactor.

The catalysed reaction is a UDP-3-O-[(3R)-3-hydroxyacyl]-N-acetyl-alpha-D-glucosamine + H2O = a UDP-3-O-[(3R)-3-hydroxyacyl]-alpha-D-glucosamine + acetate. Its pathway is glycolipid biosynthesis; lipid IV(A) biosynthesis; lipid IV(A) from (3R)-3-hydroxytetradecanoyl-[acyl-carrier-protein] and UDP-N-acetyl-alpha-D-glucosamine: step 2/6. Functionally, catalyzes the hydrolysis of UDP-3-O-myristoyl-N-acetylglucosamine to form UDP-3-O-myristoylglucosamine and acetate, the committed step in lipid A biosynthesis. The sequence is that of UDP-3-O-acyl-N-acetylglucosamine deacetylase from Haemophilus influenzae (strain PittEE).